Here is a 430-residue protein sequence, read N- to C-terminus: Histidine--tRNA ligase (430 aa).

Belongs to the class-II aminoacyl-tRNA synthetase family. In terms of assembly, homodimer.

Its subcellular location is the cytoplasm. It carries out the reaction tRNA(His) + L-histidine + ATP = L-histidyl-tRNA(His) + AMP + diphosphate + H(+). In Gloeothece citriformis (strain PCC 7424) (Cyanothece sp. (strain PCC 7424)), this protein is Histidine--tRNA ligase.